The primary structure comprises 555 residues: Bifunctional epoxide hydrolase 2 (555 aa).

Residues 1–224 (MTLRAAVFDL…KVTGIQLLNT (224 aa)) are phosphatase. 2 residues coordinate Mg(2+): aspartate 9 and aspartate 11. At lysine 43 the chain carries N6-acetyllysine. Lysine 55 is subject to N6-succinyllysine. Phosphate is bound at residue 123–124 (TN). Aspartate 185 contributes to the Mg(2+) binding site. N6-acetyllysine occurs at positions 191 and 215. The epoxide hydrolase stretch occupies residues 235 to 555 (SDMSHGYVTV…ARNPPVVSKM (321 aa)). The AB hydrolase-1 domain maps to 259–531 (PAVCLCHGFP…CGHWTQMDKP (273 aa)). The active-site Nucleophile is aspartate 335. At serine 370 the chain carries Phosphoserine. Substrate is bound at residue tyrosine 383. Residues lysine 421 and lysine 455 each carry the N6-succinyllysine modification. Tyrosine 466 acts as the Proton donor in catalysis. Cysteine 522 carries S-(15-deoxy-Delta12,14-prostaglandin J2-9-yl)cysteine lipidation. The Proton acceptor role is filled by histidine 524. A Microbody targeting signal motif is present at residues 553 to 555 (SKM). The residue at position 554 (lysine 554) is an N6-succinyllysine.

This sequence belongs to the AB hydrolase superfamily. Epoxide hydrolase family. As to quaternary structure, homodimer. Mg(2+) is required as a cofactor. In terms of processing, the N-terminus is blocked. The covalent modification of cysteine by 15-deoxy-Delta12,14-prostaglandin-J2 is autocatalytic and reversible. It may occur as an alternative to other cysteine modifications, such as S-nitrosylation and S-palmitoylation.

Its subcellular location is the cytoplasm. It localises to the peroxisome. It carries out the reaction an epoxide + H2O = an ethanediol. The enzyme catalyses (9S,10S)-10-hydroxy-9-(phosphooxy)octadecanoate + H2O = (9S,10S)-9,10-dihydroxyoctadecanoate + phosphate. It catalyses the reaction 12-phosphooxy-(9Z)-octadecenoate + H2O = 12-hydroxy-(9Z)-octadecenoate + phosphate. The catalysed reaction is 12-phosphooxy-(9E)-octadecenoate + H2O = 12-hydroxy-(9E)-octadecenoate + phosphate. It carries out the reaction 12-(phosphooxy)octadecanoate + H2O = 12-hydroxyoctadecanoate + phosphate. The enzyme catalyses 8,9-epoxy-(5Z,11Z,14Z)-eicosatrienoate + H2O = 8,9-dihydroxy-(5Z,11Z,14Z)-eicosatrienoate. It catalyses the reaction 11,12-epoxy-(5Z,8Z,14Z)-eicosatrienoate + H2O = 11,12-dihydroxy-(5Z,8Z,14Z)-eicosatrienoate. The catalysed reaction is 14,15-epoxy-(5Z,8Z,11Z)-eicosatrienoate + H2O = 14,15-dihydroxy-(5Z,8Z,11Z)-eicosatrienoate. It carries out the reaction 9,10-epoxy-(12Z)-octadecenoate + H2O = 9,10-dihydroxy-(12Z)-octadecenoate. The enzyme catalyses 8-hydroxy-(11S,12S)-epoxy-(5Z,9E,14Z)-eicosatrienoate + H2O = (8,11R,12S)-trihydroxy-(5Z,9E,14Z)-eicosatrienoate. It catalyses the reaction 10-hydroxy-(11S,12S)-epoxy- (5Z,8Z,14Z)-eicosatrienoate + H2O = (10,11S,12R)-trihydroxy-(5Z,8Z,14Z)-eicosatrienoate. The catalysed reaction is 1-tetradecanoyl-sn-glycerol 3-phosphate + H2O = 1-tetradecanoyl-sn-glycerol + phosphate. It carries out the reaction 1-octadecanoyl-sn-glycero-3-phosphate + H2O = 1-octadecanoyl-sn-glycerol + phosphate. The enzyme catalyses 1-(5Z,8Z,11Z,14Z-eicosatetraenoyl)-sn-glycero-3-phosphate + H2O = 1-(5Z,8Z,11Z,14Z-eicosatetraenoyl)-sn-glycerol + phosphate. It catalyses the reaction 1-hexadecanoyl-sn-glycero-3-phosphate + H2O = 1-hexadecanoyl-sn-glycerol + phosphate. The catalysed reaction is 1-(9Z-octadecenoyl)-sn-glycero-3-phosphate + H2O = 1-(9Z-octadecenoyl)-sn-glycerol + phosphate. It carries out the reaction (8S,9R)-epoxy-(5Z,11Z,14Z)-eicosatrienoate + H2O = (8S,9S)-dihydroxy-(5Z,11Z,14Z)-eicosatrienoate. The enzyme catalyses (11S,12R)-epoxy-(5Z,8Z,14Z)-eicosatrienoate + H2O = (11R,12R)-dihydroxy-(5Z,8Z,14Z)-eicosatrienoate. It catalyses the reaction (11S,12R)-epoxy-(5Z,8Z,14Z)-eicosatrienoate + H2O = (11S,12S)-dihydroxy-(5Z,8Z,14Z)-eicosatrienoate. The catalysed reaction is (14S,15R)-epoxy-(5Z,8Z,11Z)-eicosatrienoate + H2O = (14R,15R)-dihydroxy-(5Z,8Z,11Z)-eicosatrienoate. It carries out the reaction (14S,15R)-epoxy-(5Z,8Z,11Z)-eicosatrienoate + H2O = (14S,15S)-dihydroxy-(5Z,8Z,11Z)-eicosatrienoate. The enzyme catalyses (11R,12S)-epoxy-(5Z,8Z,14Z)-eicosatrienoate + H2O = (11S,12S)-dihydroxy-(5Z,8Z,14Z)-eicosatrienoate. It catalyses the reaction (11R,12S)-epoxy-(5Z,8Z,14Z)-eicosatrienoate + H2O = (11R,12R)-dihydroxy-(5Z,8Z,14Z)-eicosatrienoate. The catalysed reaction is (8S,9R)-epoxy-(5Z,11Z,14Z)-eicosatrienoate + H2O = (8R,9R)-dihydroxy-(5Z,11Z,14Z)-eicosatrienoate. It carries out the reaction (14R,15S)-epoxy-(5Z,8Z,11Z)-eicosatrienoate + H2O = (14R,15R)-dihydroxy-(5Z,8Z,11Z)-eicosatrienoate. Its activity is regulated as follows. Inhibited by 1-(1-acetylpiperidin-4-yl)-3-(4-(trifl uoromethoxy)phenyl)urea (TPAU), 1-cyclohexyl-3-dodecylurea (CDU), 12-(3-adamantan-1-yl-ureido)-dodecanoic acid (AUDA), 1-((3S, 5S, 7S)-adamantan-1-yl)-3-(5-(2-(2-ethoxyethoxy) ethoxy)pentyl)urea (AEPU), N-adamantyl-N[']-cyclohexyl urea (ACU), 4-(((1S, 4S)-4-(3-((3S, 5S, 7S)-adamantan-1-yl) ureido)cyclohexyl)oxy)benzoic acid (c-AUCB), 4-(((1R, 4R)-4-(3-((3S, 5S, 7S)-adamantan-1-yl)ureido)cyclohexyl)oxy)benzoic acid (t-AUCB), 4-(((1R, 4R)-4-(3-(4(trifluoromethoxy)phenyl)ureido)cyclohexyl)oxy)benzoic acid (t-TAUCB) and to a lesser extent by 8-(3-((3S, 5S, 7S)-adamantan-1-yl)ureido) octanoic acid (AUOA). Phosphatase activity is inhibited by dodecyl-phosphate, phospholipids such as phospho-lysophosphatidic acids and fatty acids such as palmitic acid and lauric acid. Bifunctional enzyme. The C-terminal domain has epoxide hydrolase activity and acts on epoxides (alkene oxides, oxiranes) and arene oxides. Plays a role in xenobiotic metabolism by degrading potentially toxic epoxides. Also determines steady-state levels of physiological mediators. Functionally, bifunctional enzyme. The N-terminal domain has lipid phosphatase activity, with the highest activity towards threo-9,10-phosphonooxy-hydroxy-octadecanoic acid, followed by erythro-9,10-phosphonooxy-hydroxy-octadecanoic acid, 12-phosphonooxy-octadec-9Z-enoic acid and 12-phosphonooxy-octadec-9E-enoic acid. Has phosphatase activity toward lyso-glycerophospholipids with also some lower activity toward lysolipids of sphingolipid and isoprenoid phosphates. In Homo sapiens (Human), this protein is Bifunctional epoxide hydrolase 2.